An 86-amino-acid chain; its full sequence is Co-chaperonin GroES (86 aa).

This sequence belongs to the GroES chaperonin family. In terms of assembly, heptamer of 7 subunits arranged in a ring. Interacts with the chaperonin GroEL.

Its subcellular location is the cytoplasm. Its function is as follows. Together with the chaperonin GroEL, plays an essential role in assisting protein folding. The GroEL-GroES system forms a nano-cage that allows encapsulation of the non-native substrate proteins and provides a physical environment optimized to promote and accelerate protein folding. GroES binds to the apical surface of the GroEL ring, thereby capping the opening of the GroEL channel. In Campylobacter jejuni subsp. jejuni serotype O:6 (strain 81116 / NCTC 11828), this protein is Co-chaperonin GroES.